The chain runs to 341 residues: uncharacterized protein (341 aa).

Residue 58 to 82 (ITGGSSGIGAAAAKKIAEAGGTVVL) participates in NADP(+) binding. Substrate is bound at residue serine 194. Tyrosine 207 (proton acceptor) is an active-site residue. Residues 309–329 (DSSAAKGSESQTDTSELDKRS) form a disordered region.

It belongs to the short-chain dehydrogenases/reductases (SDR) family.

This is an uncharacterized protein from Mycobacterium bovis (strain ATCC BAA-935 / AF2122/97).